The sequence spans 84 residues: U2-theraphotoxin-Cg1b 1 (84 aa).

The signal sequence occupies residues 1-21 (MKVSVLITLAVWGVMFLLTSA). Positions 22–48 (QERGSDQMDSPAWLKSMERIFQSEERE) are excised as a propeptide. 3 cysteine pairs are disulfide-bonded: C49-C63, C56-C68, and C62-C76.

The protein belongs to the neurotoxin 10 (Hwtx-1) family. 06 (F4b) subfamily. In terms of tissue distribution, expressed by the venom gland.

Its subcellular location is the secreted. Functionally, probable ion channel inhibitor. This is U2-theraphotoxin-Cg1b 1 from Chilobrachys guangxiensis (Chinese earth tiger tarantula).